The following is a 365-amino-acid chain: Keratin-associated protein 10-6 (365 aa).

A run of 29 repeats spans residues 41-45 (CCEPP), 46-50 (CCAPA), 67-71 (CCPVT), 89-93 (CCQQS), 99-103 (CCASS), 109-113 (CCVPV), 114-118 (CCKTV), 119-123 (CCKPV), 124-128 (CCVSV), 129-133 (CCGDS), 135-139 (CCQQS), 145-149 (CCTSS), 155-159 (CCVPV), 160-164 (CCKPV), 172-176 (CCQQS), 186-190 (CCQAV), 208-212 (CCQQS), 218-222 (CCTSS), 228-232 (CCVPV), 233-237 (CCVPV), 238-242 (CCVPT), 250-254 (CCQQS), 260-264 (CCTSS), 270-274 (CCVPV), 282-286 (CCQQS), 292-296 (CCTAS), 297-301 (CCRSS), 316-320 (CCVPV), and 334-338 (CCRTA). Positions 41-338 (CCEPPCCAPA…SCQPSCCRTA (298 aa)) are 29 X 5 AA repeats of C-C-X(3).

The protein belongs to the KRTAP type 10 family. Interacts with hair keratins. In terms of tissue distribution, restricted to a narrow region of the hair fiber cuticle, lying approximately 20 cell layers above the apex of the dermal papilla of the hair root; not detected in any other tissues.

In the hair cortex, hair keratin intermediate filaments are embedded in an interfilamentous matrix, consisting of hair keratin-associated proteins (KRTAP), which are essential for the formation of a rigid and resistant hair shaft through their extensive disulfide bond cross-linking with abundant cysteine residues of hair keratins. The matrix proteins include the high-sulfur and high-glycine-tyrosine keratins. The polypeptide is Keratin-associated protein 10-6 (KRTAP10-6) (Homo sapiens (Human)).